The sequence spans 292 residues: Chondroitin proteoglycan 3 (292 aa).

The N-terminal stretch at 1–17 is a signal peptide; it reads MRFVFIIALLLIGASLA. Positions 28–103 are disordered; the sequence is DVSASEDEFS…EGSGDTSPVV (76 aa). The segment covering 38–80 has biased composition (low complexity); it reads GDSSGEISGESSGEASGEASGEASGEASGEASGESSGETSGES. Positions 81–96 are enriched in acidic residues; the sequence is SGDEETSGEGSGEEGS. N-linked (GlcNAc...) asparagine glycosylation is found at asparagine 174 and asparagine 254.

This is Chondroitin proteoglycan 3 from Caenorhabditis elegans.